Reading from the N-terminus, the 536-residue chain is Zinc finger protein 623 (536 aa).

The tract at residues 57-77 (GELLGNPEGQSLGSSPSQDRG) is disordered. Polar residues predominate over residues 64-74 (EGQSLGSSPSQ). 13 consecutive C2H2-type zinc fingers follow at residues 123 to 145 (NPCD…RISH), 151 to 173 (YTCD…QRIH), 179 to 201 (YVCN…QRVH), 207 to 229 (FKCA…QRVH), 235 to 257 (FECK…QRIH), 263 to 285 (YECN…YQIH), 291 to 313 (YECK…QRIH), 319 to 341 (FECN…QRIH), 347 to 369 (YVCN…QRIH), 375 to 397 (YECN…QKIH), 403 to 425 (YECK…QKIH), 431 to 453 (FECK…QIIH), and 459 to 481 (YVCS…QKIH). Lysine 445 participates in a covalent cross-link: Glycyl lysine isopeptide (Lys-Gly) (interchain with G-Cter in SUMO2). The interval 513–536 (LSLSKAPIHLGERSVDKGEHTGNL) is disordered. Over residues 522-536 (LGERSVDKGEHTGNL) the composition is skewed to basic and acidic residues.

The protein belongs to the krueppel C2H2-type zinc-finger protein family.

Its subcellular location is the nucleus. Functionally, may be involved in transcriptional regulation. The sequence is that of Zinc finger protein 623 (ZNF623) from Homo sapiens (Human).